Here is a 609-residue protein sequence, read N- to C-terminus: Protein tesmin/TSO1-like CXC 3 (609 aa).

Basic and acidic residues predominate over residues 69-84 (ESRFRSQKDVSASKEV). 4 disordered regions span residues 69 to 102 (ESRF…YKND), 307 to 328 (PISP…SSCK), 457 to 477 (LFEQ…KTQQ), and 569 to 609 (NSKR…TPHH). The CRC domain occupies 326–451 (SCKRCNCKKS…RCEGCKNAFG (126 aa)). Polar residues predominate over residues 466 to 477 (TSGTPGTKKTQQ).

The protein belongs to the lin-54 family. Ubiquitous but expressed mostly in flowers and at significant levels in leaves. Detected with highest levels in developing ovules and microspores, and in petals.

The protein localises to the nucleus. Plays a role in development of both male and female reproductive tissues. The protein is Protein tesmin/TSO1-like CXC 3 (TCX3) of Arabidopsis thaliana (Mouse-ear cress).